Consider the following 498-residue polypeptide: ATP synthase subunit beta, chloroplastic (498 aa).

172-179 is an ATP binding site; it reads GGAGVGKT.

The protein belongs to the ATPase alpha/beta chains family. As to quaternary structure, F-type ATPases have 2 components, CF(1) - the catalytic core - and CF(0) - the membrane proton channel. CF(1) has five subunits: alpha(3), beta(3), gamma(1), delta(1), epsilon(1). CF(0) has four main subunits: a(1), b(1), b'(1) and c(9-12).

Its subcellular location is the plastid. The protein resides in the chloroplast thylakoid membrane. It catalyses the reaction ATP + H2O + 4 H(+)(in) = ADP + phosphate + 5 H(+)(out). Functionally, produces ATP from ADP in the presence of a proton gradient across the membrane. The catalytic sites are hosted primarily by the beta subunits. This Galbulimima belgraveana (Northern pigeonberry ash) protein is ATP synthase subunit beta, chloroplastic.